The following is a 443-amino-acid chain: Tubulin beta chain (443 aa).

Positions 11, 69, 138, 142, 143, 144, 204, and 226 each coordinate GTP. Position 69 (E69) interacts with Mg(2+). Residues 424–443 (QYQDASAEEEGEFEGEEEEA) are disordered. Over residues 429 to 443 (SAEEEGEFEGEEEEA) the composition is skewed to acidic residues.

This sequence belongs to the tubulin family. In terms of assembly, dimer of alpha and beta chains. A typical microtubule is a hollow water-filled tube with an outer diameter of 25 nm and an inner diameter of 15 nM. Alpha-beta heterodimers associate head-to-tail to form protofilaments running lengthwise along the microtubule wall with the beta-tubulin subunit facing the microtubule plus end conferring a structural polarity. Microtubules usually have 13 protofilaments but different protofilament numbers can be found in some organisms and specialized cells. Mg(2+) serves as cofactor.

It localises to the cytoplasm. Its subcellular location is the cytoskeleton. Its function is as follows. Tubulin is the major constituent of microtubules, a cylinder consisting of laterally associated linear protofilaments composed of alpha- and beta-tubulin heterodimers. Microtubules grow by the addition of GTP-tubulin dimers to the microtubule end, where a stabilizing cap forms. Below the cap, tubulin dimers are in GDP-bound state, owing to GTPase activity of alpha-tubulin. The sequence is that of Tubulin beta chain (TUBB) from Chlamydomonas incerta.